A 199-amino-acid polypeptide reads, in one-letter code: Large ribosomal subunit protein bL25 (199 aa).

It belongs to the bacterial ribosomal protein bL25 family. CTC subfamily. In terms of assembly, part of the 50S ribosomal subunit; part of the 5S rRNA/L5/L18/L25 subcomplex. Contacts the 5S rRNA. Binds to the 5S rRNA independently of L5 and L18.

Functionally, this is one of the proteins that binds to the 5S RNA in the ribosome where it forms part of the central protuberance. The chain is Large ribosomal subunit protein bL25 from Caldanaerobacter subterraneus subsp. tengcongensis (strain DSM 15242 / JCM 11007 / NBRC 100824 / MB4) (Thermoanaerobacter tengcongensis).